Consider the following 600-residue polypeptide: CBP80/20-dependent translation initiation factor (600 aa).

An N-acetylmethionine modification is found at M1. Residues 1–18 (MENSSAASASSEAGSSRS) show a composition bias toward low complexity. 4 disordered regions span residues 1-20 (MENSSAASASSEAGSSRSQE), 43-62 (DKTEGDGESQRTQSHISQWT), 134-154 (KQPLPHIDREGCGKGKLEDGD), and 175-370 (PHEA…SSPQ). Positions 1 to 305 (MENSSAASAS…PPCSPDTLTP (305 aa)) are interaction with NCBP1/CBP80. Phosphoserine is present on S18. Residues 52–62 (QRTQSHISQWT) show a composition bias toward polar residues. Basic and acidic residues predominate over residues 139 to 152 (HIDREGCGKGKLED). The segment covering 183–198 (TKKLFRRRRNDRRRQQ) has biased composition (basic residues). The span at 258 to 272 (PPGDKGEAGSHRNAK) shows a compositional bias: basic and acidic residues. A Phosphothreonine modification is found at T289. S299 is subject to Phosphoserine. The span at 321–339 (AEIKHKDTVLPERLRERPK) shows a compositional bias: basic and acidic residues. In terms of domain architecture, MIF4G spans 378-579 (MEILNIMRNN…LEVIELHANS (202 aa)).

It belongs to the CTIF family. Interacts with NCBP1/CBP80; the interaction is direct. Associates with the eukaryotic translation initiation factor 3 (eIF-3) complex. In terms of tissue distribution, widely expressed.

It is found in the cytoplasm. The protein localises to the perinuclear region. Functionally, specifically required for the pioneer round of mRNA translation mediated by the cap-binding complex (CBC), that takes place during or right after mRNA export via the nuclear pore complex (NPC). Acts via its interaction with the NCBP1/CBP80 component of the CBC complex and recruits the 40S small subunit of the ribosome via eIF3. In contrast, it is not involved in steady state translation, that takes place when the CBC complex is replaced by cytoplasmic cap-binding protein eIF4E. Also required for nonsense-mediated mRNA decay (NMD), the pioneer round of mRNA translation mediated by the cap-binding complex playing a central role in nonsense-mediated mRNA decay (NMD). In Mus musculus (Mouse), this protein is CBP80/20-dependent translation initiation factor (Ctif).